Reading from the N-terminus, the 123-residue chain is MSITKDQILEAFAAMSVMEVVELIEAMEEKFGVSAAAAVVAGGAADAGAAAEEQTEFTVMLTAHGDNKVAVIKAIRGATGLGLKEAKAMSEAAPVAVKEGVSKEEAEALKKELVEAGATVEIK.

Belongs to the bacterial ribosomal protein bL12 family. In terms of assembly, homodimer. Part of the ribosomal stalk of the 50S ribosomal subunit. Forms a multimeric L10(L12)X complex, where L10 forms an elongated spine to which 2 to 4 L12 dimers bind in a sequential fashion. Binds GTP-bound translation factors.

Functionally, forms part of the ribosomal stalk which helps the ribosome interact with GTP-bound translation factors. Is thus essential for accurate translation. This chain is Large ribosomal subunit protein bL12, found in Shewanella sp. (strain ANA-3).